Consider the following 572-residue polypeptide: Cuticlin-6 (572 aa).

Positions 1–24 (MRPIPYDISLSITSFLSLILICSA) are cleaved as a signal peptide. Topologically, residues 25 to 541 (NPIDNGLVDS…PLPYPLINTN (517 aa)) are extracellular. The VWFA domain occupies 47-216 (EVILLLDASG…QLDRALADSL (170 aa)). N-linked (GlcNAc...) asparagine glycosylation is present at Asn78. A ZP domain is found at 233 to 479 (ICGPDRIGVK…GGCEGITPPQ (247 aa)). Residues 542–562 (LWIMGIITLTNIFVFILTVWF) form a helical membrane-spanning segment. Residues 563–572 (TFRKRRCKPA) are Cytoplasmic-facing.

The protein resides in the cell membrane. Functionally, plays a role in alae formation in dauer larvae probably by regulating cuticle assembly. In Caenorhabditis elegans, this protein is Cuticlin-6.